The chain runs to 461 residues: GTPase Der (461 aa).

EngA-type G domains follow at residues Gln-2 to Val-164 and Ile-197 to Thr-368. GTP-binding positions include Gly-8 to Ser-15, Asp-55 to Leu-59, Asn-116 to Asp-119, Gly-203 to Ser-210, Asp-250 to Ile-254, and Asn-314 to Asp-317. Residues Gln-369–Gly-453 form the KH-like domain.

Belongs to the TRAFAC class TrmE-Era-EngA-EngB-Septin-like GTPase superfamily. EngA (Der) GTPase family. Associates with the 50S ribosomal subunit.

Its function is as follows. GTPase that plays an essential role in the late steps of ribosome biogenesis. This Campylobacter curvus (strain 525.92) protein is GTPase Der.